Reading from the N-terminus, the 680-residue chain is Tumor protein 63 (680 aa).

The tract at residues 1 to 107 (MNFETSRCAT…MQDSDLSDPM (107 aa)) is transcription activation. Over residues 123–157 (QIQNGSSSTSPYNTDHAQNSVTAPSPYAQPSSTFD) the composition is skewed to polar residues. The interval 123–171 (QIQNGSSSTSPYNTDHAQNSVTAPSPYAQPSSTFDALSPSPAIPSNTDY) is disordered. A DNA-binding region spans residues 170–362 (DYPGPHSFDV…KADEDSIRKQ (193 aa)). Residues C244, H247, C308, and C312 each coordinate Zn(2+). The segment covering 351 to 360 (DRKADEDSIR) has biased composition (basic and acidic residues). Disordered stretches follow at residues 351–393 (DRKA…IKKR) and 436–472 (RQQQQQQHQHLLQKQTSMQSQSSYGNSSPPLNKMNSM). The segment at 352-388 (RKADEDSIRKQQVSDSAKNGDGTKRPFRQNTHGIQMT) is interaction with HIPK2. Residues 379–389 (RQNTHGIQMTS) are compositionally biased toward polar residues. The interval 394-443 (RSPDDELLYLPVRGRETYEMLLKIKESLELMQYLPQHTIETYRQQQQQQH) is oligomerization. Residues 437–463 (QQQQQQHQHLLQKQTSMQSQSSYGNSS) are compositionally biased toward low complexity. Residues 541 to 607 (PPYPTDCSIV…WKGILDHRQL (67 aa)) form the SAM domain. The segment at 610-680 (FSSPPHLLRT…KQQRIKEEGE (71 aa)) is transactivation inhibition. K676 is covalently cross-linked (Glycyl lysine isopeptide (Lys-Gly) (interchain with G-Cter in SUMO)).

The protein belongs to the p53 family. In terms of assembly, binds DNA as a homotetramer. Isoform composition of the tetramer may determine transactivation activity. Interacts with HIPK2. Interacts with SSRP1, leading to stimulate coactivator activity. Interacts with PDS5A. Interacts (via activation domain) with NOC2L. Interacts with WWP1. The cofactor is Zn(2+). In terms of processing, may be sumoylated. Ubiquitinated. Polyubiquitination involves WWP1 and leads to proteasomal degradation of this protein. In terms of tissue distribution, widely expressed, notably in thymus, prostate, placenta and skeletal muscle, although the precise isoform varies according to tissue type. Progenitor cell layers of skin, breast and prostate express high levels of DeltaN-type isoforms.

It is found in the nucleus. Acts as a sequence specific DNA binding transcriptional activator or repressor. The isoforms contain a varying set of transactivation and auto-regulating transactivation inhibiting domains thus showing an isoform specific activity. May be required in conjunction with TP73/p73 for initiation of p53/TP53 dependent apoptosis in response to genotoxic insults and the presence of activated oncogenes. Involved in Notch signaling by probably inducing JAG1 and JAG2. Activates transcription of the p21 promoter. Activates RIPK4 transcription. Plays a role in the regulation of epithelial morphogenesis. The ratio of DeltaN-type and TA*-type isoforms may govern the maintenance of epithelial stem cell compartments and regulate the initiation of epithelial stratification from the undifferentiated embryonal ectoderm. Required for limb formation from the apical ectodermal ridge. The polypeptide is Tumor protein 63 (Tp63) (Mus musculus (Mouse)).